A 338-amino-acid polypeptide reads, in one-letter code: UPF0324 membrane protein HI_1643 (338 aa).

10 helical membrane passes run Pro5–Leu23, His33–Phe55, Gly62–Phe84, Ala94–Tyr116, Leu123–Val145, Val155–Trp177, Leu222–Thr239, Ile254–Leu273, Leu280–Ala302, and Pro312–Ile334.

This sequence belongs to the UPF0324 family.

Its subcellular location is the cell membrane. This chain is UPF0324 membrane protein HI_1643, found in Haemophilus influenzae (strain ATCC 51907 / DSM 11121 / KW20 / Rd).